Here is a 332-residue protein sequence, read N- to C-terminus: Ketol-acid reductoisomerase (NADP(+)) (332 aa).

The region spanning 1–182 (MATIYRDKDA…GGTRAGVLET (182 aa)) is the KARI N-terminal Rossmann domain. NADP(+) contacts are provided by residues 25–28 (YGNQ), Lys-49, Ser-51, and 83–86 (DELQ). His-108 is an active-site residue. Gly-134 contributes to the NADP(+) binding site. In terms of domain architecture, KARI C-terminal knotted spans 183–328 (TFAEETETDL…AELRAMMPWL (146 aa)). Positions 191, 195, 227, and 231 each coordinate Mg(2+). Substrate is bound at residue Ser-252.

The protein belongs to the ketol-acid reductoisomerase family. It depends on Mg(2+) as a cofactor.

It catalyses the reaction (2R)-2,3-dihydroxy-3-methylbutanoate + NADP(+) = (2S)-2-acetolactate + NADPH + H(+). The enzyme catalyses (2R,3R)-2,3-dihydroxy-3-methylpentanoate + NADP(+) = (S)-2-ethyl-2-hydroxy-3-oxobutanoate + NADPH + H(+). It participates in amino-acid biosynthesis; L-isoleucine biosynthesis; L-isoleucine from 2-oxobutanoate: step 2/4. It functions in the pathway amino-acid biosynthesis; L-valine biosynthesis; L-valine from pyruvate: step 2/4. Its function is as follows. Involved in the biosynthesis of branched-chain amino acids (BCAA). Catalyzes an alkyl-migration followed by a ketol-acid reduction of (S)-2-acetolactate (S2AL) to yield (R)-2,3-dihydroxy-isovalerate. In the isomerase reaction, S2AL is rearranged via a Mg-dependent methyl migration to produce 3-hydroxy-3-methyl-2-ketobutyrate (HMKB). In the reductase reaction, this 2-ketoacid undergoes a metal-dependent reduction by NADPH to yield (R)-2,3-dihydroxy-isovalerate. In Methanothrix thermoacetophila (strain DSM 6194 / JCM 14653 / NBRC 101360 / PT) (Methanosaeta thermophila), this protein is Ketol-acid reductoisomerase (NADP(+)).